The following is a 42-amino-acid chain: Alpha-lactalbumin I (42 aa).

The C-type lysozyme domain maps to 1–42; the sequence is IDYRKCQASQILKEHGMDKVIPLPELVCTMFHISGLSPQAEV.

Belongs to the glycosyl hydrolase 22 family. Lactose synthase (LS) is a heterodimer of a catalytic component, beta1,4-galactosyltransferase (beta4Gal-T1) and a regulatory component, alpha-lactalbumin (LA). As to expression, mammary gland specific. Secreted in milk.

It is found in the secreted. Its function is as follows. Regulatory subunit of lactose synthase, changes the substrate specificity of galactosyltransferase in the mammary gland making glucose a good acceptor substrate for this enzyme. This enables LS to synthesize lactose, the major carbohydrate component of milk. In other tissues, galactosyltransferase transfers galactose onto the N-acetylglucosamine of the oligosaccharide chains in glycoproteins. This Macropus giganteus (Eastern gray kangaroo) protein is Alpha-lactalbumin I (LALBA).